Reading from the N-terminus, the 342-residue chain is Phosphate acyltransferase (342 aa).

This sequence belongs to the PlsX family. As to quaternary structure, homodimer. Probably interacts with PlsY.

The protein resides in the cytoplasm. It catalyses the reaction a fatty acyl-[ACP] + phosphate = an acyl phosphate + holo-[ACP]. The protein operates within lipid metabolism; phospholipid metabolism. In terms of biological role, catalyzes the reversible formation of acyl-phosphate (acyl-PO(4)) from acyl-[acyl-carrier-protein] (acyl-ACP). This enzyme utilizes acyl-ACP as fatty acyl donor, but not acyl-CoA. In Shewanella halifaxensis (strain HAW-EB4), this protein is Phosphate acyltransferase.